Here is a 93-residue protein sequence, read N- to C-terminus: Co-chaperonin GroES (93 aa).

The protein belongs to the GroES chaperonin family. Heptamer of 7 subunits arranged in a ring. Interacts with the chaperonin GroEL.

The protein localises to the cytoplasm. In terms of biological role, together with the chaperonin GroEL, plays an essential role in assisting protein folding. The GroEL-GroES system forms a nano-cage that allows encapsulation of the non-native substrate proteins and provides a physical environment optimized to promote and accelerate protein folding. GroES binds to the apical surface of the GroEL ring, thereby capping the opening of the GroEL channel. This Lacticaseibacillus paracasei (strain ATCC 334 / BCRC 17002 / CCUG 31169 / CIP 107868 / KCTC 3260 / NRRL B-441) (Lactobacillus paracasei) protein is Co-chaperonin GroES.